We begin with the raw amino-acid sequence, 424 residues long: Tyrosine--tRNA ligase 1 (424 aa).

An L-tyrosine-binding site is contributed by Tyr-37. A 'HIGH' region motif is present at residues 42-51 (PTADSLHLGH). Residues Tyr-175 and Gln-179 each contribute to the L-tyrosine site. The 'KMSKS' region signature appears at 235 to 239 (KFGKT). Lys-238 provides a ligand contact to ATP. Residues 357 to 414 (ADLQQALVNAGLVPSRGQARTMISSNAVAINGEKQSEPEYLFTDSNRLFDRYTLLRRG) enclose the S4 RNA-binding domain.

This sequence belongs to the class-I aminoacyl-tRNA synthetase family. TyrS type 1 subfamily. As to quaternary structure, homodimer.

It localises to the cytoplasm. It catalyses the reaction tRNA(Tyr) + L-tyrosine + ATP = L-tyrosyl-tRNA(Tyr) + AMP + diphosphate + H(+). In terms of biological role, catalyzes the attachment of tyrosine to tRNA(Tyr) in a two-step reaction: tyrosine is first activated by ATP to form Tyr-AMP and then transferred to the acceptor end of tRNA(Tyr). In Photorhabdus laumondii subsp. laumondii (strain DSM 15139 / CIP 105565 / TT01) (Photorhabdus luminescens subsp. laumondii), this protein is Tyrosine--tRNA ligase 1.